A 103-amino-acid polypeptide reads, in one-letter code: Co-chaperonin GroES (103 aa).

Belongs to the GroES chaperonin family. Heptamer of 7 subunits arranged in a ring. Interacts with the chaperonin GroEL.

The protein localises to the cytoplasm. Its function is as follows. Together with the chaperonin GroEL, plays an essential role in assisting protein folding. The GroEL-GroES system forms a nano-cage that allows encapsulation of the non-native substrate proteins and provides a physical environment optimized to promote and accelerate protein folding. GroES binds to the apical surface of the GroEL ring, thereby capping the opening of the GroEL channel. This is Co-chaperonin GroES from Thermosynechococcus vestitus (strain NIES-2133 / IAM M-273 / BP-1).